The following is a 506-amino-acid chain: Zinc finger protein 157 (506 aa).

The region spanning V27–S98 is the KRAB domain. C2H2-type zinc fingers lie at residues F162–H184, Y190–H212, F218–H240, Y246–H268, Y274–H296, Y302–H324, Y330–H352, Y358–H380, Y386–H408, Y414–H436, Y442–H464, and F470–H492.

This sequence belongs to the krueppel C2H2-type zinc-finger protein family.

The protein resides in the nucleus. Its function is as follows. May be involved in transcriptional regulation. This is Zinc finger protein 157 (ZNF157) from Homo sapiens (Human).